The chain runs to 729 residues: Cellulose synthase-like protein E1 (729 aa).

2 consecutive transmembrane segments (helical) span residues 29–49 (VIAY…IWFY) and 64–84 (LIWF…VVTQ). Residues Asp-152 and Asp-443 contribute to the active site. 5 helical membrane-spanning segments follow: residues 526-546 (LPVL…IPLF), 553-573 (WFIP…AEFL), 644-664 (MFLV…AAVA), 680-700 (QFVI…GMLL), and 709-729 (MSVT…LAFL).

The protein belongs to the glycosyltransferase 2 family. Plant cellulose synthase-like E subfamily.

It is found in the golgi apparatus membrane. In terms of biological role, thought to be a Golgi-localized beta-glycan synthase that polymerize the backbones of noncellulosic polysaccharides (hemicelluloses) of plant cell wall. The sequence is that of Cellulose synthase-like protein E1 (CSLE1) from Arabidopsis thaliana (Mouse-ear cress).